A 194-amino-acid chain; its full sequence is ATP-dependent Clp protease proteolytic subunit (194 aa).

Ser97 acts as the Nucleophile in catalysis. His122 is a catalytic residue.

The protein belongs to the peptidase S14 family. As to quaternary structure, fourteen ClpP subunits assemble into 2 heptameric rings which stack back to back to give a disk-like structure with a central cavity, resembling the structure of eukaryotic proteasomes.

Its subcellular location is the cytoplasm. The catalysed reaction is Hydrolysis of proteins to small peptides in the presence of ATP and magnesium. alpha-casein is the usual test substrate. In the absence of ATP, only oligopeptides shorter than five residues are hydrolyzed (such as succinyl-Leu-Tyr-|-NHMec, and Leu-Tyr-Leu-|-Tyr-Trp, in which cleavage of the -Tyr-|-Leu- and -Tyr-|-Trp bonds also occurs).. In terms of biological role, cleaves peptides in various proteins in a process that requires ATP hydrolysis. Has a chymotrypsin-like activity. Plays a major role in the degradation of misfolded proteins. The chain is ATP-dependent Clp protease proteolytic subunit from Campylobacter jejuni subsp. jejuni serotype O:23/36 (strain 81-176).